Consider the following 366-residue polypeptide: Aminomethyltransferase (366 aa).

The protein belongs to the GcvT family. As to quaternary structure, the glycine cleavage system is composed of four proteins: P, T, L and H.

It catalyses the reaction N(6)-[(R)-S(8)-aminomethyldihydrolipoyl]-L-lysyl-[protein] + (6S)-5,6,7,8-tetrahydrofolate = N(6)-[(R)-dihydrolipoyl]-L-lysyl-[protein] + (6R)-5,10-methylene-5,6,7,8-tetrahydrofolate + NH4(+). The glycine cleavage system catalyzes the degradation of glycine. The sequence is that of Aminomethyltransferase from Bordetella bronchiseptica (strain ATCC BAA-588 / NCTC 13252 / RB50) (Alcaligenes bronchisepticus).